Consider the following 259-residue polypeptide: Adenosylcobinamide-GDP ribazoletransferase (259 aa).

The next 7 membrane-spanning stretches (helical) occupy residues Ala-41–Phe-61, Phe-67–Gly-87, Ile-119–Ser-139, Leu-148–Leu-168, Ala-179–Pro-199, Leu-200–Ala-220, and Thr-237–Leu-257.

Belongs to the CobS family. Mg(2+) is required as a cofactor.

The protein localises to the cell inner membrane. The catalysed reaction is alpha-ribazole + adenosylcob(III)inamide-GDP = adenosylcob(III)alamin + GMP + H(+). It carries out the reaction alpha-ribazole 5'-phosphate + adenosylcob(III)inamide-GDP = adenosylcob(III)alamin 5'-phosphate + GMP + H(+). It functions in the pathway cofactor biosynthesis; adenosylcobalamin biosynthesis; adenosylcobalamin from cob(II)yrinate a,c-diamide: step 7/7. In terms of biological role, joins adenosylcobinamide-GDP and alpha-ribazole to generate adenosylcobalamin (Ado-cobalamin). Also synthesizes adenosylcobalamin 5'-phosphate from adenosylcobinamide-GDP and alpha-ribazole 5'-phosphate. This Mesorhizobium japonicum (strain LMG 29417 / CECT 9101 / MAFF 303099) (Mesorhizobium loti (strain MAFF 303099)) protein is Adenosylcobinamide-GDP ribazoletransferase.